The chain runs to 965 residues: MDALRPGSPYQPIIEELRNYPQKRFYNVSKLGGTKYDVLPYSIRVLFESSIRNCDGFLVKETDAMNILDWKTKQNDVEVPFCPARVVLQDFTGIPAMVDFAAMREAVRNAGGDPVKVNPACPTDLTVDHSLQIDFSKCAIQNAPNPGGGEAQKPTAKLSPLKGQPRKLPCRGQSSCKGPCSAGELSRASGQFSAQIENTPILCPFHLQPVPEPETVLKNQEMEFGRNRERLQFFKWSSKVFKNTSIIPPETGMAHQVNLEYLSRVVFDVEDFLYPDSVVGTDSHTTMVNGLGILGWGVGGIETEAVMLGMPVTLTLPEVVGCELTGTASPLATSIDIVLGITKHLRQAEVAGKFVEFFGSGVSQLSVADRTTIANMCPEYGAILSFFPVDNVTLKHLRHTGFDEAKLEVMEAYLKAVKLFRNGESSSREPEYSQVVQISLSSIIPHVSGPKRSQDRVAVNNMKSDFQTCLNEKAGVKGFQIAAEKQNDVVPVQYEGNQYELSHGCVVIAAVISCTNNCNPSVMLAAGLLAKKAVEAGLEVKPYIRTSLSPGSGMVTHYLSSSGVLPYLSKLGFEVVGYGCSTCVGNTAPLPEAIRNAIKQGDIIACGVLSGTKNFEGRLCDCVRANYLASPPLVVAYAIAGTVRIDFETEPLGTGFNGRSIYLRDIWPTRKELHTVEEECVISSMFKELKEKMEKGNKRWNSLEAPESPLFPWDLKSTYIRCPSFFDKLAKEPVSLQPIENAHVLLYLGDSVTTDHISPAGSIARSSAAAKYLTNKGLTPREFNSYGARRGNDAVMTRGTFANIKLLNKFIGKPAPKTIHFPSGQTLDVFEAAELYQKEGIPVIILAGKKYGLGSSRDWAAKGPFLLGVKAVLAESYEKVHKSQLIGIGIAPLQFLPGENPNTLGLTGREQFSILFPPELSPKMTLDIKTSTGKVFSVFALFENDVEITLYKNGGSLNFVARRFL.

Residues 142-170 form a disordered region; sequence NAPNPGGGEAQKPTAKLSPLKGQPRKLPC. Residues C514, C580, and C583 each contribute to the [4Fe-4S] cluster site.

The protein belongs to the aconitase/IPM isomerase family. The cofactor is [4Fe-4S] cluster. Post-translationally, ubiquitinated and degraded by the proteasome in presence of high level of iron and oxygen.

Its subcellular location is the cytoplasm. Functionally, RNA-binding protein that binds to iron-responsive elements (IRES), which are stem-loop structures found in the 5'-UTR of ferritin, and delta aminolevulinic acid synthase mRNAs, and in the 3'-UTR of transferrin receptor mRNA. Binding to the IRE element in ferritin results in the repression of its mRNA translation. Binding of the protein to the transferrin receptor mRNA inhibits the degradation of this otherwise rapidly degraded mRNA. The chain is Iron-responsive element-binding protein 2 (IREB2) from Gallus gallus (Chicken).